The sequence spans 368 residues: (3S,6E)-nerolidol synthase (368 aa).

Residues Asp-91, Asn-228, and Ser-232 each coordinate Mg(2+). Positions 91-95 (DDLLE) match the DDXXE motif motif.

The protein belongs to the terpene synthase family. Mg(2+) is required as a cofactor. It depends on Mn(2+) as a cofactor.

The enzyme catalyses (2E,6E)-farnesyl diphosphate + H2O = (3S,6E)-nerolidol + diphosphate. It catalyses the reaction (2E)-geranyl diphosphate + H2O = (S)-linalool + diphosphate. It functions in the pathway secondary metabolite biosynthesis; terpenoid biosynthesis. Sesquiterpene synthase converting farnesyl diphosphate to nerolidol. Also has a monoterpene synthase activity, converting geranyl diphosphate into linalool as the major product. Has no diterpene synthase activity. The polypeptide is (3S,6E)-nerolidol synthase (Selaginella moellendorffii (Spikemoss)).